The primary structure comprises 674 residues: Amino-acid acetyltransferase, mitochondrial (674 aa).

A mitochondrion-targeting transit peptide spans 1–50; it reads MPLVAAMLTRSNGAWKKATSVVQASICRDQQRPNHTTITSVTSVSQRRHF. Positions 33-45 are enriched in polar residues; that stretch reads PNHTTITSVTSVS. The tract at residues 33–74 is disordered; sequence PNHTTITSVTSVSQRRHFSSAENGAKPSRSHPSAAEAKQKRE. The N-acetyltransferase domain maps to 497–665; sequence GTPRLKLTDT…YEDVCRGVVP (169 aa).

It belongs to the acetyltransferase family.

Its subcellular location is the mitochondrion. It carries out the reaction L-glutamate + acetyl-CoA = N-acetyl-L-glutamate + CoA + H(+). Its pathway is amino-acid biosynthesis; L-arginine biosynthesis; N(2)-acetyl-L-ornithine from L-glutamate: step 1/4. In terms of biological role, N-acetylglutamate synthase involved in arginine biosynthesis. In Podospora anserina (strain S / ATCC MYA-4624 / DSM 980 / FGSC 10383) (Pleurage anserina), this protein is Amino-acid acetyltransferase, mitochondrial (ARG2).